A 150-amino-acid polypeptide reads, in one-letter code: Ribosome maturation factor RimP (150 aa).

This sequence belongs to the RimP family.

It localises to the cytoplasm. Functionally, required for maturation of 30S ribosomal subunits. In Thermotoga sp. (strain RQ2), this protein is Ribosome maturation factor RimP.